The sequence spans 66 residues: DNA gyrase inhibitor YacG (66 aa).

Zn(2+) is bound by residues Cys10, Cys13, Cys29, and Cys33.

This sequence belongs to the DNA gyrase inhibitor YacG family. Interacts with GyrB. Requires Zn(2+) as cofactor.

Functionally, inhibits all the catalytic activities of DNA gyrase by preventing its interaction with DNA. Acts by binding directly to the C-terminal domain of GyrB, which probably disrupts DNA binding by the gyrase. The sequence is that of DNA gyrase inhibitor YacG from Edwardsiella ictaluri (strain 93-146).